Consider the following 453-residue polypeptide: Phosphoglucosamine mutase (453 aa).

The active-site Phosphoserine intermediate is Ser105. Residues Ser105, Asp244, Asp246, and Asp248 each coordinate Mg(2+). Phosphoserine is present on Ser105.

This sequence belongs to the phosphohexose mutase family. Requires Mg(2+) as cofactor. Activated by phosphorylation.

The catalysed reaction is alpha-D-glucosamine 1-phosphate = D-glucosamine 6-phosphate. Catalyzes the conversion of glucosamine-6-phosphate to glucosamine-1-phosphate. In Blochmanniella pennsylvanica (strain BPEN), this protein is Phosphoglucosamine mutase.